The sequence spans 563 residues: Rhodopsin kinase GRK1 (563 aa).

The segment at 1–15 (MDFGSLETVVANSAF) is interaction with RCVRN. Residues 1–189 (MDFGSLETVV…LEAQPMGEDW (189 aa)) are N-terminal. Phosphoserine is present on Ser5. Thr8 is modified (phosphothreonine). Ser21 carries the phosphoserine; by PKA and autocatalysis modification. In terms of domain architecture, RGS spans 58–175 (FESVCLEQPI…LGSLYFLRFL (118 aa)). The region spanning 190 to 455 (FLDFRVLGKG…CDKLRAHPLF (266 aa)) is the Protein kinase domain. ATP-binding positions include 196 to 204 (LGKGGFGEV) and Lys219. Catalysis depends on Asp317, which acts as the Proton acceptor. The region spanning 456–521 (KDLNWRQLEA…GNCPIPWQEE (66 aa)) is the AGC-kinase C-terminal domain. The segment at 456–563 (KDLNWRQLEA…SSKSGMCLVS (108 aa)) is C-terminal. Residue Ser491 is modified to Phosphoserine; by autocatalysis. Thr492 bears the Phosphothreonine; by autocatalysis mark. Positions 539–563 (QMPDDMKGISGGSSSSSKSGMCLVS) are disordered. A compositionally biased stretch (low complexity) spans 550-563 (GSSSSSKSGMCLVS). Residue Cys560 is modified to Cysteine methyl ester. Cys560 is lipidated: S-farnesyl cysteine. Positions 561–563 (LVS) are cleaved as a propeptide — removed in mature form.

Belongs to the protein kinase superfamily. AGC Ser/Thr protein kinase family. GPRK subfamily. As to quaternary structure, interacts (via N-terminus) with RCVRN (via C-terminus); the interaction is Ca(2+)-dependent. Interacts (when prenylated) with PDE6D; this promotes release from membranes. May form a complex composed of RHO, GRK1 and RCVRN in a Ca(2+)-dependent manner; RCVRN prevents the interaction between GRK1 and RHO. In terms of processing, autophosphorylated, Ser-21 is a minor site of autophosphorylation compared to Ser-491 and Thr-492. Phosphorylation at Ser-21 is regulated by light and activated by cAMP. Post-translationally, farnesylation is required for full activity. In terms of tissue distribution, retinal-specific. Expressed in rods and cones cells.

It localises to the membrane. The protein resides in the cell projection. The protein localises to the cilium. Its subcellular location is the photoreceptor outer segment. It catalyses the reaction L-threonyl-[rhodopsin] + ATP = O-phospho-L-threonyl-[rhodopsin] + ADP + H(+). It carries out the reaction L-seryl-[rhodopsin] + ATP = O-phospho-L-seryl-[rhodopsin] + ADP + H(+). Its activity is regulated as follows. Inhibited by RCVRN, which prevents the interaction between GRK1 and RHO. Inhibition is calcium-dependent. Inhibited by phosphorylation of Ser-21. In terms of biological role, retina-specific kinase involved in the signal turnoff via phosphorylation of rhodopsin (RHO), the G protein- coupled receptor that initiates the phototransduction cascade. This rapid desensitization is essential for scotopic vision and permits rapid adaptation to changes in illumination. May play a role in the maintenance of the outer nuclear layer in the retina. This chain is Rhodopsin kinase GRK1, found in Homo sapiens (Human).